We begin with the raw amino-acid sequence, 343 residues long: MAGGRPHLKRSFSIIPCFVFVESVLLGIVILLAYRLEFTDTFPVHTQGFFCYDSTYAKPYPGPEAASRVPPALVYALVTAGPTLTILLGELARAFFPAPPSAVPVIGESTIVSGACCRFSPPVRRLVRFLGVYSFGLFTTTIFANAGQVVTGNPTPHFLSVCRPNYTALGCLPPSPDRPGPDRFVTDQGACAGSPSLVAAARRAFPCKDAALCAYAVTYTAMYVTLVFRVKGSRLVKPSLCLALLCPAFLVGVVRVAEYRNHWSDVLAGFLTGAAIATFLVTCVVHNFQSRPPSGRRLSPWEDLGQAPTMDSPLEKNPRSAGRIRHRHGSPHPSRRTAPAVAT.

3 consecutive transmembrane segments (helical) span residues 12–32 (FSII…VILL), 69–89 (VPPA…ILLG), and 129–149 (FLGV…AGQV). A glycan (N-linked (GlcNAc...) asparagine) is linked at Asn165. The next 3 helical transmembrane spans lie at 210–230 (AALC…VFRV), 239–259 (SLCL…VAEY), and 266–286 (VLAG…CVVH). The interval 290–343 (SRPPSGRRLSPWEDLGQAPTMDSPLEKNPRSAGRIRHRHGSPHPSRRTAPAVAT) is disordered. Residues Ser299 and Ser312 each carry the phosphoserine modification. The span at 322-335 (GRIRHRHGSPHPSR) shows a compositional bias: basic residues.

Belongs to the PA-phosphatase related phosphoesterase family.

The protein resides in the membrane. This is Phospholipid phosphatase-related protein type 2 from Homo sapiens (Human).